The primary structure comprises 901 residues: Pantothenate kinase 2 (901 aa).

Over residues 1 to 10 (MAGQEDEYDP) the composition is skewed to acidic residues. Residues 1–50 (MAGQEDEYDPILDNKREAEAKSQVSVAADKNMAPSTSGTPIHRSGSRPQL) form a disordered region. The segment at 1–466 (MAGQEDEYDP…LGDLDEKISW (466 aa)) is pantothenate kinase. The 4'-phosphopantetheine phosphatase stretch occupies residues 467-901 (MEKFVRRGTE…CVCRYEPPSL (435 aa)). Residues D731, N732, and D767 each coordinate Mn(2+). The short motif at 851-855 (EGMGR) is the Subfamily II EGMGR motif element.

The protein in the N-terminal section; belongs to the type II pantothenate kinase family. In the C-terminal section; belongs to the damage-control phosphatase family. Phosphopantetheine phosphatase II subfamily. It depends on Mn(2+) as a cofactor. Ni(2+) serves as cofactor. In terms of tissue distribution, highly expressed in leaves and developing seeds. Expressed in roots, stems and flowers.

The enzyme catalyses (R)-pantothenate + ATP = (R)-4'-phosphopantothenate + ADP + H(+). It carries out the reaction (R)-4'-phosphopantothenate + H2O = (R)-pantothenate + phosphate. It catalyses the reaction (R)-4'-phosphopantetheine + H2O = (R)-pantetheine + phosphate. The catalysed reaction is (R)-4'-phosphopantetheine sulfonate + H2O = (R)-pantetheine sulfonate + phosphate. It functions in the pathway cofactor biosynthesis; coenzyme A biosynthesis; CoA from (R)-pantothenate: step 1/5. With respect to regulation, activity is strongly promoted by Co(2+), Ni(2+) and Mn(2+). Activity is inhibited by EDTA. Catalyzes the phosphorylation of pantothenate the first step in CoA biosynthesis. May play a role in the physiological regulation of the intracellular CoA concentration. Functionally redudant with PANK1. The phosphatase activity shows preference for normal or oxidatively damaged intermediates of 4'-phosphopantetheine, which provides strong indirect evidence that the phosphatase activity pre-empts damage in the CoA pathway. Hydrolyzing excess 4'-phosphopantetheine could constitute a directed overflow mechanism to prevent its oxidation to the S-sulfonate, sulfonate, or other forms. Hydrolyzing 4'-phosphopantetheine sulfonate or S-sulfonate would forestall their conversion to inactive forms of CoA and acyl carrier protein. In Arabidopsis thaliana (Mouse-ear cress), this protein is Pantothenate kinase 2 (PANK2).